The sequence spans 211 residues: MRNIQIALTKGRLEKHVIPLFEKIGIGCSELKDKGRKLVFKSKNTNISFILVKAVDVATYVEHGVADIGVVGKDILMEFEKDIYEMVDLGVGVCKFCVASIPTYNPKSYRKKRIATKYPHITSTYFHDKGEDVEIIKIEGSVEIAPLLGLADAIVDIVETGKTLQENGLIVFEEMCSISARMIVNKAALKTKKDEIFRIINMMEQEILSGK.

Belongs to the ATP phosphoribosyltransferase family. Short subfamily. As to quaternary structure, heteromultimer composed of HisG and HisZ subunits.

Its subcellular location is the cytoplasm. The catalysed reaction is 1-(5-phospho-beta-D-ribosyl)-ATP + diphosphate = 5-phospho-alpha-D-ribose 1-diphosphate + ATP. Its pathway is amino-acid biosynthesis; L-histidine biosynthesis; L-histidine from 5-phospho-alpha-D-ribose 1-diphosphate: step 1/9. Functionally, catalyzes the condensation of ATP and 5-phosphoribose 1-diphosphate to form N'-(5'-phosphoribosyl)-ATP (PR-ATP). Has a crucial role in the pathway because the rate of histidine biosynthesis seems to be controlled primarily by regulation of HisG enzymatic activity. This is ATP phosphoribosyltransferase from Bacillus mycoides (strain KBAB4) (Bacillus weihenstephanensis).